Reading from the N-terminus, the 275-residue chain is Large ribosomal subunit protein uL2 (275 aa).

The tract at residues 221–275 is disordered; the sequence is RGMTMNPVDHPMGGGEGRSKGHIPQSPWGIPAKGYKTRKSKKPSDKLIVKRRKQK.

Belongs to the universal ribosomal protein uL2 family. As to quaternary structure, part of the 50S ribosomal subunit. Forms a bridge to the 30S subunit in the 70S ribosome.

In terms of biological role, one of the primary rRNA binding proteins. Required for association of the 30S and 50S subunits to form the 70S ribosome, for tRNA binding and peptide bond formation. It has been suggested to have peptidyltransferase activity; this is somewhat controversial. Makes several contacts with the 16S rRNA in the 70S ribosome. The protein is Large ribosomal subunit protein uL2 of Kosmotoga olearia (strain ATCC BAA-1733 / DSM 21960 / TBF 19.5.1).